The primary structure comprises 30 residues: Beta-endorphin-2 (30 aa).

Tyr-1 carries the post-translational modification N-acetyltyrosine.

It belongs to the POMC family.

It localises to the secreted. In Oncorhynchus keta (Chum salmon), this protein is Beta-endorphin-2.